The chain runs to 271 residues: TIP41-like protein (271 aa).

K106 is subject to N6-acetyllysine. The tract at residues 173 to 271 is interaction with PPP2CA; that stretch reads RVMPSSFFLL…PVDSQSTPSE (99 aa). S265 and S270 each carry phosphoserine.

The protein belongs to the TIP41 family. As to quaternary structure, interacts with PPP2CA. Interacts with PPP2CB, PPP4C and PPP6C. Interacts with IGBP1; the interaction is dependent on PPP2CA. Associates with a protein phosphatase 2A PP2A(C):IGBP1 complex. Interacts with PPP4C and PPP4R2.

The protein localises to the cytoplasm. In terms of biological role, may be a allosteric regulator of serine/threonine-protein phosphatase 2A (PP2A). Inhibits catalytic activity of the PP2A(D) core complex in vitro. The PP2A(C):TIPRL complex does not show phosphatase activity. Acts as a negative regulator of serine/threonine-protein phosphatase 4 probably by inhibiting the formation of the active PPP4C:PPP4R2 complex; the function is proposed to implicate it in DNA damage response by promoting H2AX phosphorylated on Ser-140 (gamma-H2AX). May play a role in the regulation of ATM/ATR signaling pathway controlling DNA replication and repair. This chain is TIP41-like protein (Tiprl), found in Mus musculus (Mouse).